Reading from the N-terminus, the 198-residue chain is Superoxide dismutase [Fe] (198 aa).

Fe cation contacts are provided by histidine 27, histidine 74, aspartate 157, and histidine 161.

Belongs to the iron/manganese superoxide dismutase family. Homodimer. Requires Fe cation as cofactor.

It catalyses the reaction 2 superoxide + 2 H(+) = H2O2 + O2. Destroys superoxide anion radicals which are normally produced within the cells and which are toxic to biological systems. The sequence is that of Superoxide dismutase [Fe] (sodB) from Pseudomonas putida (strain ATCC 47054 / DSM 6125 / CFBP 8728 / NCIMB 11950 / KT2440).